The chain runs to 276 residues: GPN-loop GTPase 3 (276 aa).

A GTP-binding site is contributed by 13–18 (SSGKST). Residues 70 to 72 (GPN) carry the Gly-Pro-Asn (GPN)-loop; involved in dimer interface motif. Residue 173–176 (SKMD) participates in GTP binding. The disordered stretch occupies residues 257-276 (EDQEPKDPDRFEADDLEDDE). A compositionally biased stretch (basic and acidic residues) spans 259–269 (QEPKDPDRFEA).

It belongs to the GPN-loop GTPase family. Heterodimers with gpn1 or gpn2. Binds to RNA polymerase II (RNAPII).

The protein resides in the cytoplasm. Its subcellular location is the nucleus. In terms of biological role, small GTPase required for proper nuclear import of RNA polymerase II and III (RNAPII and RNAPIII). May act at an RNAP assembly step prior to nuclear import. This chain is GPN-loop GTPase 3, found in Schizosaccharomyces pombe (strain 972 / ATCC 24843) (Fission yeast).